A 96-amino-acid polypeptide reads, in one-letter code: Protein CLAVATA 3 (96 aa).

The signal sequence occupies residues 1–21 (MDSKSFLLLLLLFCFLFLHDA). Positions 68–96 (ELRTVPSGPDPLHHHVNPPRQPRNNFQLP) are disordered. Residues proline 73 and proline 76 each carry the hydroxyproline modification. Proline 76 is a glycosylation site (O-linked (Ara...) hydroxyproline).

The protein belongs to the CLV3/ESR signal peptide family. Interacts with the extracellular leucine-rich repeat region of CLV1. Interacts with CLV2. CLV3-derived CLE peptides interacts with a tetrameric complex made of two CLV2/CRN heterodimers. In terms of processing, the MCLV3 peptide contains two hydroxyprolines, but hydroxylation had no direct effect on MCLV3 activity. The O-glycosylation (arabinosylation) of the hydroxyproline P-76 enhances binding affinity of the MCLV3 peptide for its receptor. As to expression, first detected in heart stage embryos in a patch of cells between the developing cotyledons. In vegetative and inflorescence meristems, expressed in a small cone of cells at the meristem apex.

It localises to the secreted. Its subcellular location is the extracellular space. Extracellular signal that regulates meristem maintenance. Acts with CLV1 as a ligand-receptor pair in a signal transduction pathway coordinating growth between adjacent meristematic regions and controlling the balance between meristem cell proliferation and differentiation. In terms of biological role, the secreted peptide MCLV3 activates a signal transduction cascade to restrict WUSCHEL (WUS) expression, inducing shoot and root meristem consumption as cells differentiated into other organs. This chain is Protein CLAVATA 3, found in Arabidopsis thaliana (Mouse-ear cress).